The chain runs to 461 residues: Cyclic AMP-responsive element-binding protein 3-like protein 3 (461 aa).

Residues 1–322 are Cytoplasmic-facing; that stretch reads MNTDLAAGKM…STSKSAQTGT (322 aa). A disordered region spans residues 51–120; sequence DQQVLPNPDS…AGCHPAQPGK (70 aa). The span at 63–85 shows a compositional bias: low complexity; the sequence is FLSSILGSGDSLPSSPLWSPEGS. Serine 173 carries the phosphoserine modification. A bZIP domain is found at 243–306; sequence VLKKIRRKIR…LSLLEQLKKL (64 aa). Residues 245–274 form a basic motif region; sequence KKIRRKIRNKQSAQESRKKKKEYIDGLETR. The segment at 285–306 is leucine-zipper; sequence LQRKVLHLEKQNLSLLEQLKKL. Residue lysine 294 forms a Glycyl lysine isopeptide (Lys-Gly) (interchain with G-Cter in ubiquitin) linkage. Residues 323–343 traverse the membrane as a helical; Signal-anchor for type II membrane protein segment; that stretch reads CVAVLLLSFALIILPSISPFG. Residues 344–461 lie on the Lumenal side of the membrane; the sequence is PNKTESPGDF…AGLEAAGDEL (118 aa). Residues 370–408 are disordered; that stretch reads RVAADAVPGSEAPGPRPEADTTREESPGSPGADWGFQDT. Serine 379 is a glycosylation site (O-linked (GalNAc...) serine). Positions 386–395 are enriched in basic and acidic residues; sequence PEADTTREES. N-linked (GlcNAc...) asparagine glycans are attached at residues asparagine 410, asparagine 413, asparagine 420, and asparagine 427. Positions 442–461 are disordered; it reads APGPSTGSGRAGLEAAGDEL.

Belongs to the bZIP family. ATF subfamily. In terms of assembly, binds DNA as a dimer. May form homodimers. Interacts with ATF6. Interacts with SYNV1/HRD1; this interaction leads to CREB3L3 ubiquitination and proteasomal degradation. Controlled by regulated intramembrane proteolysis (RIP). Following ER stress a fragment containing the cytoplasmic transcription factor domain is released by proteolysis. The cleavage seems to be performed sequentially by site-1 and site-2 proteases (PS1 and PS2). In terms of processing, N- and O-glycosylated. N-glycosylation is required for optimal proteolytic activation. O-glycosylated with core 1 or possibly core 8 glycans. Post-translationally, ubiquitinated at Lys-294 by SYNV1/HRD1 via 'Lys-27'-linked ubiquitin. As to expression, exclusively expressed in liver. Underexpressed in hepatocellular carcinoma tissues.

The protein localises to the endoplasmic reticulum membrane. It is found in the nucleus. Functionally, transcription factor that may act during endoplasmic reticulum stress by activating unfolded protein response target genes. Activated in response to cAMP stimulation. In vitro, binds to the cAMP response element (CRE) and box-B element. Activates transcription through box-B element. Activates transcription through CRE. May function synergistically with ATF6. In acute inflammatory response, may activate expression of acute phase response (APR) genes. May be involved in growth suppression. Regulates FGF21 transcription. Plays a crucial role in the regulation of triglyceride metabolism and is required for the maintenance of normal plasma triglyceride concentrations. The protein is Cyclic AMP-responsive element-binding protein 3-like protein 3 (CREB3L3) of Homo sapiens (Human).